The following is a 530-amino-acid chain: Bifunctional purine biosynthesis protein PurH (530 aa).

The MGS-like domain maps to 1 to 148 (MNNARPIRRA…KNHKDVTIVV (148 aa)).

This sequence belongs to the PurH family.

The catalysed reaction is (6R)-10-formyltetrahydrofolate + 5-amino-1-(5-phospho-beta-D-ribosyl)imidazole-4-carboxamide = 5-formamido-1-(5-phospho-D-ribosyl)imidazole-4-carboxamide + (6S)-5,6,7,8-tetrahydrofolate. It carries out the reaction IMP + H2O = 5-formamido-1-(5-phospho-D-ribosyl)imidazole-4-carboxamide. The protein operates within purine metabolism; IMP biosynthesis via de novo pathway; 5-formamido-1-(5-phospho-D-ribosyl)imidazole-4-carboxamide from 5-amino-1-(5-phospho-D-ribosyl)imidazole-4-carboxamide (10-formyl THF route): step 1/1. Its pathway is purine metabolism; IMP biosynthesis via de novo pathway; IMP from 5-formamido-1-(5-phospho-D-ribosyl)imidazole-4-carboxamide: step 1/1. This is Bifunctional purine biosynthesis protein PurH from Vibrio vulnificus (strain YJ016).